The sequence spans 257 residues: Inositol diphosphatase DSP2 (257 aa).

Residues 66-251 enclose the Tyrosine-protein phosphatase domain; sequence NFSMVDNGIF…VSGLKHTPMS (186 aa). 1D-myo-inositol hexakisphosphate is bound by residues isoleucine 168 and lysine 172. Cysteine 192 acts as the Phosphocysteine intermediate in catalysis.

It belongs to the protein-tyrosine phosphatase family. Atypical dual-specificity phosphatase Siw14-like subfamily. Expressed in roots, leaves, stems, flowers and siliques.

The catalysed reaction is 5-diphospho-1D-myo-inositol 1,2,3,4,6-pentakisphosphate + H2O = 1D-myo-inositol hexakisphosphate + phosphate + H(+). It carries out the reaction 1,5-bis(diphospho)-1D-myo-inositol 2,3,4,6-tetrakisphosphate + H2O = 1-diphospho-1D-myo-inositol 2,3,4,5,6-pentakisphosphate + phosphate + 2 H(+). It catalyses the reaction 3,5-bis(diphospho)-1D-myo-inositol 1,2,4,6-tetrakisphosphate + H2O = 3-diphospho-1D-myo-inositol 1,2,4,5,6-pentakisphosphate + phosphate + 2 H(+). The enzyme catalyses 6-diphospho-1D-myo-inositol pentakisphosphate + H2O = 1D-myo-inositol hexakisphosphate + phosphate + H(+). Cleaves the beta-phosphate at the 5-position of soluble inositol pyrophosphates. Has highest activity on 5-diphosphoinositol 1,2,3,4,6-pentakisphosphate (5-InsP(7)), 1,5-bis-diphosphoinositol 2,3,4,6-tetrakisphosphate (1,5-InsP(8)) and 3,5-InsP(8). Possesses phosphotyrosine phosphatase activity in vitro. Dephosphorylates the phosphoinositides PI(3,5)P2. Hydrolyzes para-nitrophenyl phosphate and O-methylfluorescein phosphate in vitro. The sequence is that of Inositol diphosphatase DSP2 from Arabidopsis thaliana (Mouse-ear cress).